The primary structure comprises 313 residues: Biotin synthase (313 aa).

The region spanning 28–258 (NFGNDIELCS…LFPQARLRLS (231 aa)) is the Radical SAM core domain. [4Fe-4S] cluster is bound by residues cysteine 46, cysteine 50, and cysteine 53. [2Fe-2S] cluster contacts are provided by cysteine 90, cysteine 121, cysteine 181, and arginine 256.

The protein belongs to the radical SAM superfamily. Biotin synthase family. In terms of assembly, homodimer. The cofactor is [4Fe-4S] cluster. [2Fe-2S] cluster serves as cofactor.

The catalysed reaction is (4R,5S)-dethiobiotin + (sulfur carrier)-SH + 2 reduced [2Fe-2S]-[ferredoxin] + 2 S-adenosyl-L-methionine = (sulfur carrier)-H + biotin + 2 5'-deoxyadenosine + 2 L-methionine + 2 oxidized [2Fe-2S]-[ferredoxin]. It functions in the pathway cofactor biosynthesis; biotin biosynthesis; biotin from 7,8-diaminononanoate: step 2/2. Catalyzes the conversion of dethiobiotin (DTB) to biotin by the insertion of a sulfur atom into dethiobiotin via a radical-based mechanism. This is Biotin synthase from Francisella philomiragia subsp. philomiragia (strain ATCC 25017 / CCUG 19701 / FSC 153 / O#319-036).